A 354-amino-acid chain; its full sequence is Protein Wnt-11 (354 aa).

The first 24 residues, 1–24 (MRARPQVCEALLFALALHTGVCYG), serve as a signal peptide directing secretion. 2 N-linked (GlcNAc...) asparagine glycosylation sites follow: Asn-40 and Asn-90. Disulfide bonds link Cys-80–Cys-91, Cys-130–Cys-138, and Cys-140–Cys-157. The N-linked (GlcNAc...) asparagine glycan is linked to Asn-160. Intrachain disulfides connect Cys-209-Cys-223, Cys-211-Cys-218, Cys-283-Cys-314, Cys-299-Cys-309, Cys-313-Cys-353, Cys-329-Cys-344, Cys-331-Cys-341, and Cys-336-Cys-337. A lipid anchor (O-palmitoleoyl serine; by PORCN) is attached at Ser-215. 2 N-linked (GlcNAc...) asparagine glycosylation sites follow: Asn-300 and Asn-304.

Belongs to the Wnt family. In terms of processing, palmitoleoylation is required for efficient binding to frizzled receptors. Depalmitoleoylation leads to Wnt signaling pathway inhibition.

It localises to the secreted. Its subcellular location is the extracellular space. The protein resides in the extracellular matrix. Ligand for members of the frizzled family of seven transmembrane receptors. Probable developmental protein. May be a signaling molecule which affects the development of discrete regions of tissues. Is likely to signal over only few cell diameters. This is Protein Wnt-11 (Wnt11) from Mus musculus (Mouse).